The following is a 364-amino-acid chain: Probable secreted lipase phiG (364 aa).

A signal peptide spans 1 to 18 (MMPFMDLILSILVSSVLL). N-linked (GlcNAc...) asparagine glycosylation occurs at Asn-49. Catalysis depends on Ser-203, which acts as the Nucleophile. N-linked (GlcNAc...) asparagine glycosylation is present at Asn-262.

This sequence belongs to the AB hydrolase superfamily.

The protein resides in the secreted. It catalyses the reaction a carboxylic ester + H2O = an alcohol + a carboxylate + H(+). Part of the gene cluster that mediates the biosynthesis of the antihypercholesterolemic agents phomoidrides which are dimeric anhydrides. The function of phiG within the pathway has still to be determined. The pathway begins with the highly reducing polyketide synthase phiA that catalyzes the formation of a C12-fatty acyl-ACP, starting from one acetate and 5 malonate units. The hydrolase phiM is involved in the release of the C12-fatty acyl chain from phiA. The alkylcitrate synthase (ACS) phiJ and the alkylcitrate dehydratase (ACDH) phiI then give rise to decarboxylated monomeric anhydrides by coupling the C12-fatty acyl chain with oxalacetic acid. The cyclase phiC is responsible for the dimerization of the monomeric anhydrides which leads to the production of prephomoidride that contains the characteristic bicyclo[4.3.1]deca-1,6-diene system of phomoidrides. Iterative oxidation catalyzed by the alpha-ketoglutarate-dependent dioxygenase phiK produced then phomoidride A. Finally, the methyltransferase phiE converts phomoidride A to phomoidride B via an acetalization reaction. The phosphatidylethanolamine-binding protein phiB and phiN are not essential for dimerization and their functions have still to be determined. The chain is Probable secreted lipase phiG from Fungal sp. (strain ATCC 74256).